A 239-amino-acid chain; its full sequence is Glutathione S-transferase verG (239 aa).

The GST N-terminal domain occupies 18–101 (KPLIFVMEGR…YLSNKYDAKR (84 aa)). The 131-residue stretch at 107–237 (NAAENLEICN…ELDSRKEIAI (131 aa)) folds into the GST C-terminal domain.

It belongs to the GST superfamily.

It catalyses the reaction RX + glutathione = an S-substituted glutathione + a halide anion + H(+). Its pathway is mycotoxin biosynthesis. In terms of biological role, glutathione S-transferase; part of the gene cluster that mediates the biosynthesis of 11'-deoxyverticillin A, one of the dimeric epipolythiodioxopiperazines (ETPs) from the verticillin family that act as mycotoxins. 11'-deoxyverticillin A is required for normal conidiation. The nonribosomal peptide synthetase verP is speculated to be responsible for condensation of amino acids to form the carbon skeleton of verticillin, whereas the cluster-specific tailoring enzymes are involved in further modifications leading to the production of 11'-deoxyverticillin A. The protein is Glutathione S-transferase verG of Clonostachys rogersoniana.